We begin with the raw amino-acid sequence, 332 residues long: Ribosomal RNA small subunit methyltransferase C (332 aa).

It belongs to the methyltransferase superfamily. RsmC family. In terms of assembly, monomer.

The protein resides in the cytoplasm. It catalyses the reaction guanosine(1207) in 16S rRNA + S-adenosyl-L-methionine = N(2)-methylguanosine(1207) in 16S rRNA + S-adenosyl-L-homocysteine + H(+). Specifically methylates the guanine in position 1207 of 16S rRNA in the 30S particle. This chain is Ribosomal RNA small subunit methyltransferase C, found in Stutzerimonas stutzeri (strain A1501) (Pseudomonas stutzeri).